Here is a 538-residue protein sequence, read N- to C-terminus: Bifunctional purine biosynthesis protein PurH (538 aa).

Positions 6–158 constitute an MGS-like domain; the sequence is KHIPAPDLHR…KNHAYVATVV (153 aa).

The protein belongs to the PurH family.

It catalyses the reaction (6R)-10-formyltetrahydrofolate + 5-amino-1-(5-phospho-beta-D-ribosyl)imidazole-4-carboxamide = 5-formamido-1-(5-phospho-D-ribosyl)imidazole-4-carboxamide + (6S)-5,6,7,8-tetrahydrofolate. The enzyme catalyses IMP + H2O = 5-formamido-1-(5-phospho-D-ribosyl)imidazole-4-carboxamide. Its pathway is purine metabolism; IMP biosynthesis via de novo pathway; 5-formamido-1-(5-phospho-D-ribosyl)imidazole-4-carboxamide from 5-amino-1-(5-phospho-D-ribosyl)imidazole-4-carboxamide (10-formyl THF route): step 1/1. It participates in purine metabolism; IMP biosynthesis via de novo pathway; IMP from 5-formamido-1-(5-phospho-D-ribosyl)imidazole-4-carboxamide: step 1/1. This Brucella anthropi (strain ATCC 49188 / DSM 6882 / CCUG 24695 / JCM 21032 / LMG 3331 / NBRC 15819 / NCTC 12168 / Alc 37) (Ochrobactrum anthropi) protein is Bifunctional purine biosynthesis protein PurH.